A 161-amino-acid chain; its full sequence is Putative TRAP transporter small permease protein HI_1030 (161 aa).

The next 4 helical transmembrane spans lie at 13–33, 51–71, 86–106, and 135–155; these read LEIL…LNVV, YLFI…NQHV, AILK…IIEG, and IAGI…IFFI.

Belongs to the TRAP transporter small permease family.

It is found in the cell inner membrane. The chain is Putative TRAP transporter small permease protein HI_1030 from Haemophilus influenzae (strain ATCC 51907 / DSM 11121 / KW20 / Rd).